A 144-amino-acid polypeptide reads, in one-letter code: uncharacterized protein (144 aa).

N-linked (GlcNAc...) asparagine glycans are attached at residues Asn-14 and Asn-15. A helical transmembrane segment spans residues 90–110; sequence FSWFIFGLFIACLLLCITLVL. Residues 120-144 are disordered; that stretch reads NKATEVVPSSNIDDEEKQLSLSDMI.

Its subcellular location is the membrane. This is an uncharacterized protein from Saccharomyces cerevisiae (strain ATCC 204508 / S288c) (Baker's yeast).